Here is a 690-residue protein sequence, read N- to C-terminus: Elongation factor G (690 aa).

The 275-residue stretch at 8–282 (KMTRNIGIMA…AVIDYLPSPL (275 aa)) folds into the tr-type G domain. Residues 17–24 (AHIDAGKT), 81–85 (DTPGH), and 135–138 (NKMD) each bind GTP.

Belongs to the TRAFAC class translation factor GTPase superfamily. Classic translation factor GTPase family. EF-G/EF-2 subfamily.

Its subcellular location is the cytoplasm. Functionally, catalyzes the GTP-dependent ribosomal translocation step during translation elongation. During this step, the ribosome changes from the pre-translocational (PRE) to the post-translocational (POST) state as the newly formed A-site-bound peptidyl-tRNA and P-site-bound deacylated tRNA move to the P and E sites, respectively. Catalyzes the coordinated movement of the two tRNA molecules, the mRNA and conformational changes in the ribosome. The polypeptide is Elongation factor G (Acholeplasma laidlawii (strain PG-8A)).